The sequence spans 610 residues: MPMYRSRTSTHGRNMAGARGLWRATGMTDGDFGKPIIAIVNSFTQFVPGHVHLKDLGQMVAREVEAAGGVAKEFNTIAVDDGIAMGHDGMLYSLPSREVIADSVEYMVNAHCADAMVCISNCDKITPGMLMAAMRLNIPAIFVSGGPMEAGKIDIADLEMTKIDLVDAMVAAANDKFTDEQVQHIEENACPTCGSCSGMFTANSMNCLAEALGLALPGNGSTLATHSDRKALFLEAGRRIVEITKRHYEGEEKGLLPREIATFEAFENAMSLDIAMGGSTNTVLHLLAIAHEGEVDFTMTDMDRLSRKVPCLCKVAPNTANVHMEDVHRAGGIFSILGELSRAGLLHDDCGTVHSASMGEAIAKWDIKVANNPEAESLFKAAPGGVRTTQAFSQSNRYKDLDTDREGGVIRSKEHAFSQDGGLAVLFGNIAEDGCIVKTAGVDASILQFTGTAHVCESQDDAVNNILTGKVKEGDVVVIRYEGPRGGPGMQEMLYPTSYLKSKGLGKACALLTDGRFSGGTSGLSIGHVSPEAAEGGTIGLVEDGDRIEIDIPNRRIHLAVSDEVLAARRAAQEAKGWHPAKPRKRKVSTALKAYAKLTTSAAKGAVRQV.

Asp81 provides a ligand contact to Mg(2+). Cys122 is a [2Fe-2S] cluster binding site. 2 residues coordinate Mg(2+): Asp123 and Lys124. Lys124 is modified (N6-carboxylysine). [2Fe-2S] cluster is bound at residue Cys196. Glu492 serves as a coordination point for Mg(2+). The active-site Proton acceptor is the Ser518.

It belongs to the IlvD/Edd family. As to quaternary structure, homodimer. The cofactor is [2Fe-2S] cluster. Requires Mg(2+) as cofactor.

It carries out the reaction (2R)-2,3-dihydroxy-3-methylbutanoate = 3-methyl-2-oxobutanoate + H2O. The enzyme catalyses (2R,3R)-2,3-dihydroxy-3-methylpentanoate = (S)-3-methyl-2-oxopentanoate + H2O. It functions in the pathway amino-acid biosynthesis; L-isoleucine biosynthesis; L-isoleucine from 2-oxobutanoate: step 3/4. The protein operates within amino-acid biosynthesis; L-valine biosynthesis; L-valine from pyruvate: step 3/4. Its function is as follows. Functions in the biosynthesis of branched-chain amino acids. Catalyzes the dehydration of (2R,3R)-2,3-dihydroxy-3-methylpentanoate (2,3-dihydroxy-3-methylvalerate) into 2-oxo-3-methylpentanoate (2-oxo-3-methylvalerate) and of (2R)-2,3-dihydroxy-3-methylbutanoate (2,3-dihydroxyisovalerate) into 2-oxo-3-methylbutanoate (2-oxoisovalerate), the penultimate precursor to L-isoleucine and L-valine, respectively. The chain is Dihydroxy-acid dehydratase from Ruegeria pomeroyi (strain ATCC 700808 / DSM 15171 / DSS-3) (Silicibacter pomeroyi).